The sequence spans 176 residues: Ribosome maturation factor RimM (176 aa).

One can recognise a PRC barrel domain in the interval 93–172 (EGEFFYFDVL…EILTKDAKSI (80 aa)).

The protein belongs to the RimM family. In terms of assembly, binds ribosomal protein uS19.

Its subcellular location is the cytoplasm. In terms of biological role, an accessory protein needed during the final step in the assembly of 30S ribosomal subunit, possibly for assembly of the head region. Essential for efficient processing of 16S rRNA. May be needed both before and after RbfA during the maturation of 16S rRNA. It has affinity for free ribosomal 30S subunits but not for 70S ribosomes. The polypeptide is Ribosome maturation factor RimM (Campylobacter curvus (strain 525.92)).